We begin with the raw amino-acid sequence, 243 residues long: tRNA (guanine-N(1)-)-methyltransferase (243 aa).

S-adenosyl-L-methionine is bound by residues G108 and 127–132; that span reads LGDFVL.

The protein belongs to the RNA methyltransferase TrmD family. As to quaternary structure, homodimer.

It localises to the cytoplasm. It catalyses the reaction guanosine(37) in tRNA + S-adenosyl-L-methionine = N(1)-methylguanosine(37) in tRNA + S-adenosyl-L-homocysteine + H(+). Its function is as follows. Specifically methylates guanosine-37 in various tRNAs. In Streptococcus equi subsp. equi (strain 4047), this protein is tRNA (guanine-N(1)-)-methyltransferase.